A 301-amino-acid chain; its full sequence is MDAIREAIRIERLSKTFSNGRKALDEIDLRIEPGEMVALIGASGSGKSTLLRHIAGFTASDAQPSQIEILGRPIQQNGRIVREVRSIRRDIGFVFQQFNLVNRLSVETNVLIGALARLPWWRRLSGRFPRAERALSIAALNEVGIGEHARERAANLSGGQQQRAALARALVQRARIVLADEPIASLDPESSRRVMDMLRTLNIEHRLTVLVSLHQVEIAMQYCPRTIALRRGKVVYDGPSAALTPALLKTLYGDEARELIDEAAQGPDDTESKNTADNTPLQDAAPASGRYAFALNPAHSN.

Positions 8–256 constitute an ABC transporter domain; it reads IRIERLSKTF…LLKTLYGDEA (249 aa). 41–48 provides a ligand contact to ATP; sequence GASGSGKS. Positions 264–287 are disordered; the sequence is AQGPDDTESKNTADNTPLQDAAPA.

Belongs to the ABC transporter superfamily. Phosphonates importer (TC 3.A.1.9.1) family. In terms of assembly, the complex is composed of two ATP-binding proteins (PhnC), two transmembrane proteins (PhnE) and a solute-binding protein (PhnD).

Its subcellular location is the cell inner membrane. It carries out the reaction phosphonate(out) + ATP + H2O = phosphonate(in) + ADP + phosphate + H(+). Functionally, part of the ABC transporter complex PhnCDE involved in phosphonates import. Responsible for energy coupling to the transport system. The sequence is that of Phosphonates import ATP-binding protein PhnC from Paraburkholderia xenovorans (strain LB400).